An 843-amino-acid polypeptide reads, in one-letter code: MAKPLTDSERQKQISVRGIAGLGDVAEVRKSFNRHLHFTLVKDRNVATPRDYFFALAHTVRDHLVGRWIRTQQHYYERDPKRIYYLSLEFYMGRTLQNTMVNLGLQTACDEATYQLGLDLEELEEIEEDAGLGNGGLGRLAACFLDSMATLGLAAYGYGIRYEFGIFNQKIVNGWQVEEADDWLRYGNPWEKARPEYMLPVHFYGRVEHTPDGVLWLDTQVVLAMPYDTPVPGYKNNTVNTMRLWSAKAPNDFKLKDFNVGDYIEAVLDRNLAENISRVLYPNDNFFEGKELRLKQEYFVVAATLQDIIRRFKSSRFGCRDPVRTCFETFPDKVAIQLNDTHPALSIPELMRILVDVEKVDWDKAWEITKKTCAYTNHTVLPEALERWPVSMFEKLLPRHLEIIYAINQRHLDHVAALFPGDVDRLRRMSVIEEGDCKRINMAHLCVIGSHAVNGVARIHSEIVKQSVFKDFYELEPEKFQNKTNGITPRRWLLLCNPGLAEIIVERIGEGFLTDLSQLKKLLSLVDDEAFIRDVAKVKQENKLKFSAQLEKEYKVKINPASMFDVHVKRIHEYKRQLLNCLHIITLYNRIKKDPAKAFVPRTVMIGGKAAPGYHMAKMIIKLVTSIGDVVNHDPVVGDRLRVIFLENYRVSLAEKVIPAADLSQQISTAGTEASGTGNMKFMLNGALTIGTMDGANVEMAEEAGEENLFIFGMRVEDVEALDQKGYNAREFYERLPELRQAVDQISSGFFSPKDPDCFKDVVNMLMYHDRFKVFADYEAYIQCQAQVDRLYRNSKEWTKKVIRNIACSGKFSSDRTITEYAREIWGVEPSDLQIPPPNLPKD.

Ala-2 bears the N-acetylalanine mark. Position 15 is a phosphoserine; by PHK; in form phosphorylase A (Ser-15). 3 residues coordinate AMP: Asp-43, Tyr-197, and Arg-310. A Phosphotyrosine modification is found at Tyr-197. The residue at position 473 (Tyr-473) is a Phosphotyrosine. A Phosphoserine modification is found at Ser-524. Pyridoxal 5'-phosphate is bound at residue Lys-569. Residues 677–678 (TG) are pyridoxal 5'-phosphate. Lys-681 carries the post-translational modification N6-(pyridoxal phosphate)lysine.

The protein belongs to the glycogen phosphorylase family. In terms of assembly, homodimer. Dimers associate into a tetramer to form the enzymatically active phosphorylase A. The cofactor is pyridoxal 5'-phosphate. In terms of processing, phosphorylation of Ser-15 converts phosphorylase B (unphosphorylated) to phosphorylase A.

The enzyme catalyses [(1-&gt;4)-alpha-D-glucosyl](n) + phosphate = [(1-&gt;4)-alpha-D-glucosyl](n-1) + alpha-D-glucose 1-phosphate. Activity of phosphorylase is controlled both by allosteric means (through the non-covalent binding of metabolites) and by covalent modification. Thus AMP allosterically activates, whereas ATP, ADP, and glucose-6-phosphate allosterically inhibit, phosphorylase B. Functionally, glycogen phosphorylase that regulates glycogen mobilization. Phosphorylase is an important allosteric enzyme in carbohydrate metabolism. Enzymes from different sources differ in their regulatory mechanisms and in their natural substrates. However, all known phosphorylases share catalytic and structural properties. In Mus musculus (Mouse), this protein is Glycogen phosphorylase, brain form (Pygb).